We begin with the raw amino-acid sequence, 115 residues long: Large ribosomal subunit protein bL19 (115 aa).

It belongs to the bacterial ribosomal protein bL19 family.

Functionally, this protein is located at the 30S-50S ribosomal subunit interface and may play a role in the structure and function of the aminoacyl-tRNA binding site. This Streptococcus gordonii (strain Challis / ATCC 35105 / BCRC 15272 / CH1 / DL1 / V288) protein is Large ribosomal subunit protein bL19.